Consider the following 623-residue polypeptide: Isocitrate dehydrogenase kinase/phosphatase (623 aa).

Residues 344–350 (APGIKGM) and Lys365 each bind ATP. Residue Asp400 is part of the active site.

Belongs to the AceK family.

It localises to the cytoplasm. The catalysed reaction is L-seryl-[isocitrate dehydrogenase] + ATP = O-phospho-L-seryl-[isocitrate dehydrogenase] + ADP + H(+). Its function is as follows. Bifunctional enzyme which can phosphorylate or dephosphorylate isocitrate dehydrogenase (IDH) on a specific serine residue. This is a regulatory mechanism which enables bacteria to bypass the Krebs cycle via the glyoxylate shunt in response to the source of carbon. When bacteria are grown on glucose, IDH is fully active and unphosphorylated, but when grown on acetate or ethanol, the activity of IDH declines drastically concomitant with its phosphorylation. The sequence is that of Isocitrate dehydrogenase kinase/phosphatase from Polaromonas naphthalenivorans (strain CJ2).